A 236-amino-acid chain; its full sequence is Small ribosomal subunit protein uS2c (236 aa).

The protein belongs to the universal ribosomal protein uS2 family.

The protein resides in the plastid. It localises to the chloroplast. The sequence is that of Small ribosomal subunit protein uS2c (rps2) from Oryza nivara (Indian wild rice).